The primary structure comprises 144 residues: uncharacterized protein (144 aa).

Residues Leu25–Val47 traverse the membrane as a helical segment.

It localises to the membrane. This is an uncharacterized protein from Treponema pallidum (strain Nichols).